We begin with the raw amino-acid sequence, 725 residues long: Catalase-peroxidase (725 aa).

The tract at residues 1–20 (MSSEAKCPFPHAANRSRSNQ) is disordered. A cross-link (tryptophyl-tyrosyl-methioninium (Trp-Tyr) (with M-241)) is located at residues 91-215 (WHATGTYRTM…LSATHMGLIY (125 aa)). Histidine 92 (proton acceptor) is an active-site residue. Residues 215–241 (YVNPEGPDGSGDYMAAAKDIRATFYRM) constitute a cross-link (tryptophyl-tyrosyl-methioninium (Tyr-Met) (with W-91)). Histidine 256 lines the heme b pocket.

The protein belongs to the peroxidase family. Peroxidase/catalase subfamily. As to quaternary structure, homodimer or homotetramer. Requires heme b as cofactor. Formation of the three residue Trp-Tyr-Met cross-link is important for the catalase, but not the peroxidase activity of the enzyme.

The catalysed reaction is H2O2 + AH2 = A + 2 H2O. It catalyses the reaction 2 H2O2 = O2 + 2 H2O. Functionally, bifunctional enzyme with both catalase and broad-spectrum peroxidase activity. The protein is Catalase-peroxidase of Janthinobacterium sp. (strain Marseille) (Minibacterium massiliensis).